The following is a 157-amino-acid chain: DNA gyrase inhibitor (157 aa).

It belongs to the DNA gyrase inhibitor family. As to quaternary structure, interacts with DNA gyrase.

It localises to the cytoplasm. In terms of biological role, inhibits the supercoiling activity of DNA gyrase. Acts by inhibiting DNA gyrase at an early step, prior to (or at the step of) binding of DNA by the gyrase. It protects cells against toxins that target DNA gyrase, by inhibiting activity of these toxins and reducing the formation of lethal double-strand breaks in the cell. This Citrobacter rodentium (strain ICC168) (Citrobacter freundii biotype 4280) protein is DNA gyrase inhibitor.